A 282-amino-acid polypeptide reads, in one-letter code: NADPH-dependent 7-cyano-7-deazaguanine reductase (282 aa).

Ile-88–Ser-90 is a binding site for substrate. Ser-90–Lys-91 is an NADPH binding site. The active-site Thioimide intermediate is Cys-190. Asp-197 serves as the catalytic Proton donor. His-229–Glu-230 contacts substrate. NADPH is bound at residue Arg-258–Gly-259.

It belongs to the GTP cyclohydrolase I family. QueF type 2 subfamily. In terms of assembly, homodimer.

The protein resides in the cytoplasm. It catalyses the reaction 7-aminomethyl-7-carbaguanine + 2 NADP(+) = 7-cyano-7-deazaguanine + 2 NADPH + 3 H(+). Its pathway is tRNA modification; tRNA-queuosine biosynthesis. Functionally, catalyzes the NADPH-dependent reduction of 7-cyano-7-deazaguanine (preQ0) to 7-aminomethyl-7-deazaguanine (preQ1). The polypeptide is NADPH-dependent 7-cyano-7-deazaguanine reductase (Escherichia coli O139:H28 (strain E24377A / ETEC)).